The chain runs to 480 residues: Selenium-binding protein 3 (480 aa).

2 residues coordinate selenite: Cys-12 and Cys-13.

Belongs to the selenium-binding protein family. In terms of tissue distribution, expressed in young seedlings, mostly in roots.

This chain is Selenium-binding protein 3 (SBP3), found in Arabidopsis thaliana (Mouse-ear cress).